The sequence spans 391 residues: Winged helix repair factor 1 (391 aa).

2 stretches are compositionally biased toward low complexity: residues 1 to 24 (MNIKRNQNNSIDNNLSIDSNPSPI) and 49 to 63 (LSFNTSNISNLSNIN). Residues 1-95 (MNIKRNQNNS…SITTTTATST (95 aa)) are disordered. Residues 64-74 (GEEDNDDDDRE) show a composition bias toward acidic residues. The segment covering 82-95 (NPNPSITTTTATST) has biased composition (low complexity).

The protein belongs to the STK19 family.

The protein localises to the nucleus. In terms of biological role, DNA-binding protein which is required for efficient transcription-coupled nucleotide excision repair. In Dictyostelium discoideum (Social amoeba), this protein is Winged helix repair factor 1.